A 452-amino-acid polypeptide reads, in one-letter code: UDP-glycosyltransferase 76D1 (452 aa).

UDP-alpha-D-glucose is bound by residues serine 269, 329–331, 346–354, and 368–371; these read APQ, HGGWNSCLE, and SGDQ.

It belongs to the UDP-glycosyltransferase family.

Functionally, possesses low quercetin 7-O-glucosyltransferase activity in vitro. The protein is UDP-glycosyltransferase 76D1 (UGT76D1) of Arabidopsis thaliana (Mouse-ear cress).